Reading from the N-terminus, the 420-residue chain is L-glutamine:2-deoxy-scyllo-inosose aminotransferase (420 aa).

An N6-(pyridoxal phosphate)lysine modification is found at Lys201.

The protein belongs to the DegT/DnrJ/EryC1 family. L-glutamine:2-deoxy-scyllo-inosose/scyllo-inosose aminotransferase subfamily. Requires pyridoxal 5'-phosphate as cofactor.

It catalyses the reaction 2-deoxy-L-scyllo-inosose + L-glutamine = 2-deoxy-scyllo-inosamine + 2-oxoglutaramate. The enzyme catalyses 3-amino-2,3-dideoxy-scyllo-inosose + L-glutamine = 2-deoxystreptamine + 2-oxoglutaramate. Its pathway is metabolic intermediate biosynthesis; 2-deoxystreptamine biosynthesis; 2-deoxystreptamine from D-glucose 6-phosphate: step 2/4. It functions in the pathway antibiotic biosynthesis; gentamicin biosynthesis. Functionally, catalyzes the PLP-dependent transamination of 2-deoxy-scyllo-inosose (2-DOI) to form 2-deoxy-scyllo-inosamine (2-DOIA) using L-glutamine as the amino donor. Also catalyzes the transamination of 3-amino-2,3-dideoxy-scyllo-inosose (keto-2-DOIA) into 2-deoxystreptamine (2-DOS). This Micromonospora echinospora (Micromonospora purpurea) protein is L-glutamine:2-deoxy-scyllo-inosose aminotransferase (gntA).